We begin with the raw amino-acid sequence, 447 residues long: Probable cytosol aminopeptidase (447 aa).

Positions 218 and 223 each coordinate Mn(2+). Lys230 is a catalytic residue. Mn(2+)-binding residues include Asp241, Asp300, and Glu302. Arg304 is a catalytic residue.

The protein belongs to the peptidase M17 family. The cofactor is Mn(2+).

It is found in the cytoplasm. It carries out the reaction Release of an N-terminal amino acid, Xaa-|-Yaa-, in which Xaa is preferably Leu, but may be other amino acids including Pro although not Arg or Lys, and Yaa may be Pro. Amino acid amides and methyl esters are also readily hydrolyzed, but rates on arylamides are exceedingly low.. The catalysed reaction is Release of an N-terminal amino acid, preferentially leucine, but not glutamic or aspartic acids.. Functionally, presumably involved in the processing and regular turnover of intracellular proteins. Catalyzes the removal of unsubstituted N-terminal amino acids from various peptides. This is Probable cytosol aminopeptidase (pepA) from Mycoplasma genitalium (strain ATCC 33530 / DSM 19775 / NCTC 10195 / G37) (Mycoplasmoides genitalium).